The chain runs to 306 residues: B- and T-lymphocyte attenuator (306 aa).

Positions 1-29 (MKTVPAMLGTPRLFREFFILHLGLWSILC) are cleaved as a signal peptide. The Extracellular portion of the chain corresponds to 30 to 183 (EKATKRNDEE…ERPGRTWLLY (154 aa)). The region spanning 37–139 (DEECPVQLTI…SQVINSHSVT (103 aa)) is the Ig-like V-type domain. Disulfide bonds link cysteine 40-cysteine 69, cysteine 64-cysteine 124, and cysteine 78-cysteine 85. Residues asparagine 74, asparagine 81, asparagine 101, asparagine 119, asparagine 148, and asparagine 165 are each glycosylated (N-linked (GlcNAc...) asparagine). Residues 184-204 (TLLPLGALLLLLACVCLLCFL) form a helical membrane-spanning segment. At 205–306 (KRIQGKEKKP…TEYASICVRS (102 aa)) the chain is on the cytoplasmic side.

Interacts with tyrosine phosphatases PTPN6/SHP-1 and PTPN11/SHP-2. Interacts with TNFRSF14/HVEM (via cysteine-rich domain 1). Post-translationally, phosphorylated on Tyr residues by TNFRSF14 and by antigen receptors cross-linking, both inducing association with PTPN6 and PTPN11. N-glycosylated. Expressed in splenic T- and B-cells as well as lymph node tissues but very weakly in somatic tissues. Also expressed in macrophages, NK cells and dendritic cells. A polymorphic tissue distribution between several strains is seen.

Its subcellular location is the cell membrane. Functionally, inhibitory receptor on lymphocytes that negatively regulates antigen receptor signaling via PTPN6/SHP-1 and PTPN11/SHP-2. May interact in cis (on the same cell) or in trans (on other cells) with TNFRSF14. In cis interactions, appears to play an immune regulatory role inhibiting in trans interactions in naive T cells to maintain a resting state. In trans interactions, can predominate during adaptive immune response to provide survival signals to effector T cells. The protein is B- and T-lymphocyte attenuator of Mus musculus (Mouse).